Consider the following 1411-residue polypeptide: Uveal autoantigen with coiled-coil domains and ankyrin repeats (1411 aa).

Methionine 1 bears the N-acetylmethionine mark. Residues 1 to 30 (MKSLKSRLWKQDAPGPTSPSSPTAVASTQS) form a disordered region. Residues 13-30 (APGPTSPSSPTAVASTQS) are compositionally biased toward low complexity. ANK repeat units lie at residues 69 to 98 (EGRS…DVAT), 102 to 131 (AGRN…PTEH), 135 to 164 (QGRT…SVNA), 168 to 197 (DGRT…DVNS), 201 to 230 (QNRT…DLTL), and 234 to 263 (LGHD…NTNK). Residues 263–301 (KGRELWRKGPPLQQRNLSHTQDEGSVKSTQREQREPHSF) are disordered. Serine 280 is modified (phosphoserine). The span at 282–301 (TQDEGSVKSTQREQREPHSF) shows a compositional bias: basic and acidic residues. Coiled coils occupy residues 299–379 (HSFQ…NRFK), 442–624 (SENE…LKEL), and 652–1380 (VKRL…AIYR). Residues 1006–1031 (GLKEQLSEQTHKCRQRDEEVKKGKQE) form a disordered region.

Component of the apoptosome complex, composed of APAF1, pro-caspase-9 and UACA. In the complex, it probably interacts directly with APAF1. Interacts with LGALS3, ARF6 and ACTB. Interacts with RAB39A. As to expression, highly expressed in heart, liver, kidney and testis. Weakly expressed in lung and skeletal muscle. Not expressed in brain and spleen.

Its subcellular location is the nucleus. The protein localises to the cytoplasm. It localises to the cytoskeleton. Its function is as follows. Regulates APAF1 expression and plays an important role in the regulation of stress-induced apoptosis. Promotes apoptosis by regulating three pathways, apoptosome up-regulation, LGALS3/galectin-3 down-regulation and NF-kappa-B inactivation. Regulates the redistribution of APAF1 into the nucleus after proapoptotic stress. Down-regulates the expression of LGALS3 by inhibiting NFKB1. In terms of biological role, modulates isoactin dynamics to regulate the morphological alterations required for cell growth and motility. Interaction with ARF6 may modulate cell shape and motility after injury. May be involved in multiple neurite formation. This is Uveal autoantigen with coiled-coil domains and ankyrin repeats (Uaca) from Mus musculus (Mouse).